The following is a 506-amino-acid chain: Probable Xaa-Pro aminopeptidase BDCG_04966 (506 aa).

Mn(2+) is bound by residues Asp285, Asp296, Glu433, and Glu471.

Belongs to the peptidase M24B family. Mn(2+) is required as a cofactor.

The catalysed reaction is Release of any N-terminal amino acid, including proline, that is linked to proline, even from a dipeptide or tripeptide.. Its function is as follows. Catalyzes the removal of a penultimate prolyl residue from the N-termini of peptides. This Ajellomyces dermatitidis (strain ER-3 / ATCC MYA-2586) (Blastomyces dermatitidis) protein is Probable Xaa-Pro aminopeptidase BDCG_04966.